Reading from the N-terminus, the 496-residue chain is Aspartyl/glutamyl-tRNA(Asn/Gln) amidotransferase subunit B (496 aa).

Belongs to the GatB/GatE family. GatB subfamily. As to quaternary structure, heterotrimer of A, B and C subunits.

The catalysed reaction is L-glutamyl-tRNA(Gln) + L-glutamine + ATP + H2O = L-glutaminyl-tRNA(Gln) + L-glutamate + ADP + phosphate + H(+). The enzyme catalyses L-aspartyl-tRNA(Asn) + L-glutamine + ATP + H2O = L-asparaginyl-tRNA(Asn) + L-glutamate + ADP + phosphate + 2 H(+). Allows the formation of correctly charged Asn-tRNA(Asn) or Gln-tRNA(Gln) through the transamidation of misacylated Asp-tRNA(Asn) or Glu-tRNA(Gln) in organisms which lack either or both of asparaginyl-tRNA or glutaminyl-tRNA synthetases. The reaction takes place in the presence of glutamine and ATP through an activated phospho-Asp-tRNA(Asn) or phospho-Glu-tRNA(Gln). The chain is Aspartyl/glutamyl-tRNA(Asn/Gln) amidotransferase subunit B from Natronomonas pharaonis (strain ATCC 35678 / DSM 2160 / CIP 103997 / JCM 8858 / NBRC 14720 / NCIMB 2260 / Gabara) (Halobacterium pharaonis).